The chain runs to 63 residues: Large ribosomal subunit protein uL29 (63 aa).

The protein belongs to the universal ribosomal protein uL29 family.

The polypeptide is Large ribosomal subunit protein uL29 (Aliarcobacter butzleri (strain RM4018) (Arcobacter butzleri)).